A 966-amino-acid polypeptide reads, in one-letter code: Alpha-1,4 glucan phosphorylase L-1 isozyme, chloroplastic/amyloplastic (966 aa).

The transit peptide at 1 to 50 (MATANGAHLFNHYSSNSRFIHFTSRNTSSKLFLTKTSHFRRPKRCFHVNN) directs the protein to the chloroplast. Position 812 is an N6-(pyridoxal phosphate)lysine (Lys-812).

The protein belongs to the glycogen phosphorylase family. It depends on pyridoxal 5'-phosphate as a cofactor. Tuber.

The protein resides in the plastid. Its subcellular location is the chloroplast. It is found in the amyloplast. It catalyses the reaction [(1-&gt;4)-alpha-D-glucosyl](n) + phosphate = [(1-&gt;4)-alpha-D-glucosyl](n-1) + alpha-D-glucose 1-phosphate. Its function is as follows. Phosphorylase is an important allosteric enzyme in carbohydrate metabolism. Enzymes from different sources differ in their regulatory mechanisms and in their natural substrates. However, all known phosphorylases share catalytic and structural properties. This is Alpha-1,4 glucan phosphorylase L-1 isozyme, chloroplastic/amyloplastic from Solanum tuberosum (Potato).